Reading from the N-terminus, the 453-residue chain is tRNA modification GTPase MnmE (453 aa).

The (6S)-5-formyl-5,6,7,8-tetrahydrofolate site is built by Arg22, Glu79, and Lys119. Residues Gly215–Gly376 form the TrmE-type G domain. Residue Asn225 participates in K(+) binding. GTP-binding positions include Asn225–Ser230, Thr244–Thr250, Asp269–Gly272, and Asn334–Asp337. Position 229 (Ser229) interacts with Mg(2+). K(+) contacts are provided by Thr244, Ile246, and Thr249. Mg(2+) is bound at residue Thr250. Lys453 contributes to the (6S)-5-formyl-5,6,7,8-tetrahydrofolate binding site.

The protein belongs to the TRAFAC class TrmE-Era-EngA-EngB-Septin-like GTPase superfamily. TrmE GTPase family. As to quaternary structure, homodimer. Heterotetramer of two MnmE and two MnmG subunits. Requires K(+) as cofactor.

It is found in the cytoplasm. Its function is as follows. Exhibits a very high intrinsic GTPase hydrolysis rate. Involved in the addition of a carboxymethylaminomethyl (cmnm) group at the wobble position (U34) of certain tRNAs, forming tRNA-cmnm(5)s(2)U34. The chain is tRNA modification GTPase MnmE from Shewanella loihica (strain ATCC BAA-1088 / PV-4).